A 439-amino-acid chain; its full sequence is Glycosyl hydrolase DigH (439 aa).

Positions 1–27 are cleaved as a signal peptide; sequence MDICSRNKKLTIRRPAILVALALLLCS. Residue Cys-28 is the site of N-palmitoyl cysteine attachment. Cys-28 carries S-diacylglycerol cysteine lipidation. A disordered region spans residues 34 to 54; sequence ESMVTPPAGSKPPATTQQSSQ.

Belongs to the glycosyl hydrolase-like 10 (GHL10) family.

The protein localises to the cell outer membrane. In terms of biological role, divisome-localized glycosyl hydrolase that cleaves peptide-free (denuded) peptidoglycans. This chain is Glycosyl hydrolase DigH, found in Escherichia coli O157:H7.